The chain runs to 1590 residues: von Willebrand factor D and EGF domain-containing protein (1590 aa).

The first 20 residues, 1 to 20, serve as a signal peptide directing secretion; the sequence is MPGGACVLVIALMFLAWGEA. Residue N367 is glycosylated (N-linked (GlcNAc...) asparagine). Positions 423–606 constitute a VWFD domain; it reads AYCYTFTDPH…EWRILPGKSM (184 aa). Intrachain disulfides connect C425/C565 and C468/C477. Residues N703 and N968 are each glycosylated (N-linked (GlcNAc...) asparagine). Positions 1177–1216 constitute an EGF-like 1 domain; sequence TVKSCDCLNGGSCVSDRNFSPGSGVYLCVCLPGFHGSLCE. 3 disulfide bridges follow: C1181–C1189, C1183–C1204, and C1206–C1215. The span at 1268-1280 shows a compositional bias: basic and acidic residues; it reads DKSVNKEEDDKNA. Residues 1268 to 1288 form a disordered region; the sequence is DKSVNKEEDDKNAQGRKRHVK. EGF-like domains lie at 1294-1326, 1358-1390, 1422-1454, 1455-1486, 1518-1550, and 1551-1582; these read AFTI…SNCQ, DEEH…PRCE, STAL…EHCQ, NAFC…RRFQ, NTPI…VRCQ, and IPIC…VKCE. 17 disulfides stabilise this stretch: C1298–C1308, C1302–C1314, C1316–C1325, C1362–C1372, C1366–C1378, C1380–C1389, C1426–C1436, C1430–C1442, C1444–C1453, C1458–C1468, C1462–C1474, C1522–C1532, C1526–C1538, C1540–C1549, C1554–C1564, C1558–C1570, and C1572–C1581.

Its subcellular location is the secreted. This chain is von Willebrand factor D and EGF domain-containing protein (VWDE), found in Homo sapiens (Human).